A 1240-amino-acid polypeptide reads, in one-letter code: Pectate lyase L (1240 aa).

Positions 1–26 (MRNCKGLSILLCFLLVFFAMPFPAVA) are cleaved as a signal peptide. Has catalytic activity regions lie at residues 27-551 (EEAE…VTVR) and 545-1240 (TLKV…KSIK). The Ca(2+) site is built by D325, E349, D350, D1049, D1073, D1074, and D1077. K1117 functions as the Proton acceptor in the catalytic mechanism.

The protein belongs to the polysaccharide lyase 9 family. It depends on Ca(2+) as a cofactor.

It is found in the secreted. It catalyses the reaction Eliminative cleavage of (1-&gt;4)-alpha-D-galacturonan to give oligosaccharides with 4-deoxy-alpha-D-galact-4-enuronosyl groups at their non-reducing ends.. Inhibited by the metal chelator ethylenediaminetetraacetic acid (EDTA). Functionally, cleaves polygalacturonate or partially methylated pectin. When assayed on polygalacturonate or on pectin, it releases monogalacturonate as the principal product. This Thermoclostridium stercorarium (Clostridium stercorarium) protein is Pectate lyase L.